We begin with the raw amino-acid sequence, 208 residues long: Small ribosomal subunit protein uS4 (208 aa).

The region spanning 96–159 (SRLDNIVYRL…KKNEKVLEAL (64 aa)) is the S4 RNA-binding domain.

It belongs to the universal ribosomal protein uS4 family. As to quaternary structure, part of the 30S ribosomal subunit. Contacts protein S5. The interaction surface between S4 and S5 is involved in control of translational fidelity.

Its function is as follows. One of the primary rRNA binding proteins, it binds directly to 16S rRNA where it nucleates assembly of the body of the 30S subunit. With S5 and S12 plays an important role in translational accuracy. The polypeptide is Small ribosomal subunit protein uS4 (Mycoplasma capricolum subsp. capricolum (strain California kid / ATCC 27343 / NCTC 10154)).